The sequence spans 144 residues: Large ribosomal subunit protein uL13 (144 aa).

This sequence belongs to the universal ribosomal protein uL13 family. As to quaternary structure, part of the 50S ribosomal subunit.

In terms of biological role, this protein is one of the early assembly proteins of the 50S ribosomal subunit, although it is not seen to bind rRNA by itself. It is important during the early stages of 50S assembly. The sequence is that of Large ribosomal subunit protein uL13 from Clostridium perfringens (strain 13 / Type A).